The sequence spans 160 residues: MNAFRLTVEVNGVTHATDVEPRRLLADFLRDDLHLRGTRVGCEHGVCGSCTVLLDGQPVRSCTVLAVQANNSRIETVESLQKDGQLHPLQRSFSKCHALQCGFCTSGFLMTLKPLYDDEDVTLDATSAREAISGNICRCTGYQQIVEATVDAFHCRDHND.

Residues 4–80 (FRLTVEVNGV…NSRIETVESL (77 aa)) form the 2Fe-2S ferredoxin-type domain. Residues Cys-42, Cys-47, Cys-50, Cys-62, Cys-101, Cys-104, Cys-137, and Cys-139 each coordinate [2Fe-2S] cluster.

Heterohexamer of 2 alpha (kdhA), 2 beta (kdhB) and 2 gamma (kdhC) subunit. Dimer of heterotrimers. Requires [2Fe-2S] cluster as cofactor.

It catalyses the reaction 6-hydroxypseudooxynicotine + A + H2O = 2,6-dihydroxypseudooxynicotine + AH2. The protein operates within alkaloid degradation; nicotine degradation. Its function is as follows. Molybdo-flavoprotein enzyme complex involved in nicotine degradation. The subunit gamma (large subunit) contains the substrate-binding sites, the subunit alpha (medium subunit) binds FAD and the subunit beta (small subunit) has a 2Fe-2S ferredoxin-type domain which binds 2 2Fe-2S clusters. The polypeptide is 6-hydroxypseudooxynicotine dehydrogenase complex subunit beta (kdhB) (Paenarthrobacter nicotinovorans (Arthrobacter nicotinovorans)).